The primary structure comprises 70 residues: Large ribosomal subunit protein uL29 (70 aa).

Belongs to the universal ribosomal protein uL29 family.

This Methanocaldococcus jannaschii (strain ATCC 43067 / DSM 2661 / JAL-1 / JCM 10045 / NBRC 100440) (Methanococcus jannaschii) protein is Large ribosomal subunit protein uL29 (rpl29).